The primary structure comprises 175 residues: Alpha-crystallin B chain (175 aa).

Position 1 is an N-acetylmethionine (Met1). The residue at position 19 (Ser19) is a Phosphoserine. The O-linked (GlcNAc) serine glycan is linked to Ser41. Phosphoserine occurs at positions 45 and 59. Residues 56 to 164 (RAPSWFDTGL…PERTIPITRE (109 aa)) enclose the sHSP domain. His83 is a binding site for Zn(2+). An N6-acetyllysine modification is found at Lys92. 4 residues coordinate Zn(2+): His104, Glu106, His111, and His119. The tract at residues 142–175 (VLTVNGPRKQVSGPERTIPITREEKPAVTAAPKK) is disordered. Residue Lys166 is modified to N6-acetyllysine. O-linked (GlcNAc) threonine glycosylation is present at Thr170.

The protein belongs to the small heat shock protein (HSP20) family. As to quaternary structure, heteromer composed of three CRYAA and one CRYAB subunits. Aggregates with homologous proteins, including the small heat shock protein HSPB1, to form large heteromeric complexes. Inter-subunit bridging via zinc ions enhances stability, which is crucial as there is no protein turn over in the lens. Interacts with HSPBAP1 and TTN/titin. Interacts with TMEM109; in the cellular response to DNA damage. Interacts with DES; binds rapidly during early stages of DES filament assembly and a reduced binding seen in the later stages. Interacts with TMED10; the interaction mediates the translocation from the cytoplasm into the ERGIC (endoplasmic reticulum-Golgi intermediate compartment) and thereby secretion. Interacts with ATP6V1A and with MTOR, forming a ternary complex.

Its subcellular location is the cytoplasm. It localises to the nucleus. The protein localises to the secreted. It is found in the lysosome. In terms of biological role, may contribute to the transparency and refractive index of the lens. Has chaperone-like activity, preventing aggregation of various proteins under a wide range of stress conditions. In lens epithelial cells, stabilizes the ATP6V1A protein, preventing its degradation by the proteasome. This is Alpha-crystallin B chain (CRYAB) from Macaca fascicularis (Crab-eating macaque).